Consider the following 79-residue polypeptide: Conotoxin Leo-O1 (79 aa).

The signal sequence occupies residues methionine 1–alanine 22. Positions asparagine 23 to arginine 51 are excised as a propeptide. 3 disulfides stabilise this stretch: cysteine 53–cysteine 70, cysteine 60–cysteine 74, and cysteine 69–cysteine 78.

Belongs to the conotoxin O1 superfamily. In terms of tissue distribution, expressed by the venom duct.

It localises to the secreted. In Conus leopardus (Leopard cone), this protein is Conotoxin Leo-O1.